The primary structure comprises 283 residues: S-methyl-5'-thioadenosine phosphorylase (283 aa).

Thr-18 lines the phosphate pocket. The residue at position 51 (Lys-51) is an N6-acetyllysine. Phosphate contacts are provided by residues 60 to 61 and 93 to 94; these read RH and TA. Substrate is bound at residue Met-196. Thr-197 contributes to the phosphate binding site. 220–222 serves as a coordination point for substrate; the sequence is DYD.

It belongs to the PNP/MTAP phosphorylase family. MTAP subfamily. In terms of assembly, homotrimer. Ubiquitously expressed.

It localises to the cytoplasm. It is found in the nucleus. It catalyses the reaction S-methyl-5'-thioadenosine + phosphate = 5-(methylsulfanyl)-alpha-D-ribose 1-phosphate + adenine. Its pathway is amino-acid biosynthesis; L-methionine biosynthesis via salvage pathway; S-methyl-5-thio-alpha-D-ribose 1-phosphate from S-methyl-5'-thioadenosine (phosphorylase route): step 1/1. Inhibited by 5'-methylthiotubercin and 5'-chloroformycin. Catalyzes the reversible phosphorylation of S-methyl-5'-thioadenosine (MTA) to adenine and 5-methylthioribose-1-phosphate. Involved in the breakdown of MTA, a major by-product of polyamine biosynthesis. Responsible for the first step in the methionine salvage pathway after MTA has been generated from S-adenosylmethionine. Has broad substrate specificity with 6-aminopurine nucleosides as preferred substrates. The sequence is that of S-methyl-5'-thioadenosine phosphorylase from Homo sapiens (Human).